Consider the following 229-residue polypeptide: Uracil-DNA glycosylase (229 aa).

Asp64 (proton acceptor) is an active-site residue.

It belongs to the uracil-DNA glycosylase (UDG) superfamily. UNG family.

The protein resides in the cytoplasm. The catalysed reaction is Hydrolyzes single-stranded DNA or mismatched double-stranded DNA and polynucleotides, releasing free uracil.. Its function is as follows. Excises uracil residues from the DNA which can arise as a result of misincorporation of dUMP residues by DNA polymerase or due to deamination of cytosine. The polypeptide is Uracil-DNA glycosylase (Shigella flexneri serotype 5b (strain 8401)).